Here is an 852-residue protein sequence, read N- to C-terminus: Genome polyprotein (852 aa).

2 short sequence motifs ((L)YPX(n)L motif) span residues 167–171 and 200–205; these read YPHGL and YPVWEL. Residues 766-836 form an involved in P1-2A pentamerization region; sequence MMSRIAAGDL…PRKMKGLFSQ (71 aa).

Belongs to the picornaviridae polyprotein family. Homodimer. Homomultimer; probably interacts with membranes in a multimeric form. Seems to assemble into amyloid-like fibers. In terms of assembly, homopentamer. Homooligomer. As to quaternary structure, interacts with capsid protein VP2. Interacts with capsid protein VP3. Interacts with capsid protein VP1. Interacts with capsid protein VP3. In terms of assembly, interacts with capsid protein VP1. Interacts with capsid protein VP2. Post-translationally, specific enzymatic cleavages by viral protease in vivo yield a variety of precursors and mature proteins. Polyprotein processing intermediates are produced, such as P1-2A which is a functional precursor of the structural proteins, VP0 which is a VP4-VP2 precursor, VP1-2A precursor, 3ABC precursor which is a stable and catalytically active precursor of 3A, 3B and 3C proteins, 3AB and 3CD precursors. The assembly signal 2A is removed from VP1-2A by a host protease, possibly host Cathepsin L. This cleavage occurs over a region of 3 amino-acids probably generating VP1 proteins with heterogeneous C-termini. In terms of processing, during virion maturation, immature virions are rendered infectious following cleavage of VP0 into VP4 and VP2. This maturation seems to be an autocatalytic event triggered by the presence of RNA in the capsid and is followed by a conformational change of the particle. The assembly signal 2A is removed from VP1-2A by a host protease, possibly host Cathepsin L in naked virions. This cleavage does not occur in enveloped virions. This cleavage occurs over a region of 3 amino-acids probably generating VP1 proteins with heterogeneous C-termini. Post-translationally, viral protein genome-linked: VPg is uridylylated prior to priming replication into VPg-pUpU. In terms of processing, unlike other picornaviruses, does not seem to be myristoylated.

It is found in the virion. It localises to the host endosome. Its subcellular location is the host multivesicular body. The protein localises to the host membrane. In terms of biological role, capsid proteins VP1, VP2, and VP3 form a closed capsid enclosing the viral positive strand RNA genome. All these proteins contain a beta-sheet structure called beta-barrel jelly roll. Together they form an icosahedral capsid (T=3) composed of 60 copies of each VP1, VP2, and VP3, with a diameter of approximately 300 Angstroms. VP1 is situated at the 12 fivefold axes, whereas VP2 and VP3 are located at the quasi-sixfold axes. The naked capsid interacts with the host receptor HAVCR1 to provide virion attachment to and probably entry into the target cell. Functionally, VP0 precursor is a component of the immature procapsids. Plays a role in the assembly of the 12 pentamers into an icosahedral structure. Has not been detected in mature virions, supposedly owing to its small size. Its function is as follows. Precursor component of immature procapsids that corresponds to an extended form of the structural protein VP1. After maturation, possibly by the host Cathepsin L, the assembly signal 2A is cleaved to give rise to the mature VP1 protein. In terms of biological role, affects membrane integrity and causes an increase in membrane permeability. Functionally, functions as a viroporin. Affects membrane integrity and causes an increase in membrane permeability. Involved in host intracellular membrane rearrangements probably to give rise to the viral factories. Does not disrupt calcium homeostasis or glycoprotein trafficking. Antagonizes the innate immune response of the host by suppressing IFN-beta synthesis, which it achieves by interfering with the RIG-I/IFIH1 pathway. The protein is Genome polyprotein of Cercopithecus hamlyni (Owl-faced monkey).